A 163-amino-acid polypeptide reads, in one-letter code: Putative pre-16S rRNA nuclease (163 aa).

This sequence belongs to the YqgF nuclease family.

Its subcellular location is the cytoplasm. Its function is as follows. Could be a nuclease involved in processing of the 5'-end of pre-16S rRNA. This chain is Putative pre-16S rRNA nuclease, found in Roseobacter denitrificans (strain ATCC 33942 / OCh 114) (Erythrobacter sp. (strain OCh 114)).